The chain runs to 248 residues: Pyridoxine 5'-phosphate synthase (248 aa).

Asn-12 contacts 3-amino-2-oxopropyl phosphate. Residue 14-15 (DH) participates in 1-deoxy-D-xylulose 5-phosphate binding. Residue Arg-23 coordinates 3-amino-2-oxopropyl phosphate. Residue His-48 is the Proton acceptor of the active site. 1-deoxy-D-xylulose 5-phosphate is bound by residues Arg-50 and His-55. Glu-75 (proton acceptor) is an active-site residue. Residue Thr-105 participates in 1-deoxy-D-xylulose 5-phosphate binding. His-199 serves as the catalytic Proton donor. Residues Gly-200 and 221–222 (GH) contribute to the 3-amino-2-oxopropyl phosphate site.

The protein belongs to the PNP synthase family. In terms of assembly, homooctamer; tetramer of dimers.

It is found in the cytoplasm. The enzyme catalyses 3-amino-2-oxopropyl phosphate + 1-deoxy-D-xylulose 5-phosphate = pyridoxine 5'-phosphate + phosphate + 2 H2O + H(+). Its pathway is cofactor biosynthesis; pyridoxine 5'-phosphate biosynthesis; pyridoxine 5'-phosphate from D-erythrose 4-phosphate: step 5/5. In terms of biological role, catalyzes the complicated ring closure reaction between the two acyclic compounds 1-deoxy-D-xylulose-5-phosphate (DXP) and 3-amino-2-oxopropyl phosphate (1-amino-acetone-3-phosphate or AAP) to form pyridoxine 5'-phosphate (PNP) and inorganic phosphate. The chain is Pyridoxine 5'-phosphate synthase from Jannaschia sp. (strain CCS1).